Here is a 443-residue protein sequence, read N- to C-terminus: Threonine/serine transporter TdcC (443 aa).

Helical transmembrane passes span 22 to 42 (TTWT…FFPI), 44 to 64 (AGFG…PIAF), 97 to 117 (GVVI…IYGV), 140 to 160 (FVAL…KDLM), 163 to 183 (VMSY…LSLI), 207 to 227 (ILIT…FSPI), 261 to 281 (MLMV…LSPA), 312 to 332 (AITL…KSFF), 366 to 386 (ISMI…PNIL), 389 to 409 (IEAM…MYAI), and 423 to 443 (DNVF…YKLF).

Belongs to the amino acid/polyamine transporter 2 family. SdaC/TdcC subfamily.

It localises to the cell inner membrane. It catalyses the reaction L-threonine(in) + H(+)(in) = L-threonine(out) + H(+)(out). It carries out the reaction L-serine(in) + H(+)(in) = L-serine(out) + H(+)(out). Involved in the import of threonine and serine into the cell, with the concomitant import of a proton (symport system). The polypeptide is Threonine/serine transporter TdcC (Escherichia coli O45:K1 (strain S88 / ExPEC)).